The following is a 477-amino-acid chain: Glycogen synthase (477 aa).

ADP-alpha-D-glucose is bound at residue Lys15.

The protein belongs to the glycosyltransferase 1 family. Bacterial/plant glycogen synthase subfamily.

The catalysed reaction is [(1-&gt;4)-alpha-D-glucosyl](n) + ADP-alpha-D-glucose = [(1-&gt;4)-alpha-D-glucosyl](n+1) + ADP + H(+). The protein operates within glycan biosynthesis; glycogen biosynthesis. Synthesizes alpha-1,4-glucan chains using ADP-glucose. The sequence is that of Glycogen synthase from Glaesserella parasuis serovar 5 (strain SH0165) (Haemophilus parasuis).